We begin with the raw amino-acid sequence, 590 residues long: Leucine-rich repeat transmembrane neuronal protein 4 (590 aa).

Positions 1-30 (MGFHLITQLKGMSVVLVLLPTLLLVMLTGA) are cleaved as a signal peptide. The region spanning 31–61 (QRACPKNCRCDGKIVYCESHAFADIPENISG) is the LRRNT domain. Topologically, residues 31–424 (QRACPKNCRC…QEYEHVSFHK (394 aa)) are extracellular. A glycan (N-linked (GlcNAc...) asparagine) is linked at Asn58. LRR repeat units follow at residues 62–83 (GSQGLSLRFNSIQKLKSNQFAG), 86–107 (QLIWLYLDHNYISSVDEDAFQG), 110–131 (RLKELILSSNKITYLHNKTFHP), 134–155 (NLRNLDLSYNKLQTLQSEQFKG), 158–179 (KLIILHLRSNSLKTVPIRVFQD), 182–203 (NLDFLDLGYNRLRSLSRNAFAG), 206–226 (KLKELHLEHNQFSKINFAHFP), 230–251 (NLRSIYLQWNRIRSISQGLTWT), 254–275 (SLHNLDLSGNDIQGIEPGTFKC), and 278–299 (NLQKLNLDSNKLTNISQETVNA). N-linked (GlcNAc...) asparagine glycosylation is present at Asn126. An N-linked (GlcNAc...) asparagine glycan is attached at Asn291. In terms of domain architecture, LRRCT spans 311-362 (NMWECSRSICPLFYWLKNFKGNKESTMICAGPKHIQGEKVSDAVETYNICSE). Residues 425 to 445 (IIAGSVALFLSVAMILLVIYV) traverse the membrane as a helical segment. Over 446-590 (SWKRYPASMK…PAIYLERIAN (145 aa)) the chain is Cytoplasmic.

The protein belongs to the LRRTM family. As to quaternary structure, peripherally associated with AMPAR complex. AMPAR complex consists of an inner core made of 4 pore-forming GluA/GRIA proteins (GRIA1, GRIA2, GRIA3 and GRIA4) and 4 major auxiliary subunits arranged in a twofold symmetry. One of the two pairs of distinct binding sites is occupied either by CNIH2, CNIH3 or CACNG2, CACNG3. The other harbors CACNG2, CACNG3, CACNG4, CACNG8 or GSG1L. This inner core of AMPAR complex is complemented by outer core constituents binding directly to the GluA/GRIA proteins at sites distinct from the interaction sites of the inner core constituents. Outer core constituents include at least PRRT1, PRRT2, CKAMP44/SHISA9, FRRS1L and NRN1. The proteins of the inner and outer core serve as a platform for other, more peripherally associated AMPAR constituents, including LRRTM4. Alone or in combination, these auxiliary subunits control the gating and pharmacology of the AMPAR complex and profoundly impact their biogenesis and protein processing. As to expression, expressed in neuronal tissues.

Its subcellular location is the cell membrane. It is found in the postsynaptic cell membrane. May play a role in the development and maintenance of the vertebrate nervous system. Exhibits strong synaptogenic activity, restricted to excitatory presynaptic differentiation. The sequence is that of Leucine-rich repeat transmembrane neuronal protein 4 (LRRTM4) from Homo sapiens (Human).